The sequence spans 1309 residues: Lysine-specific demethylase 2B (1309 aa).

Residue Ser-26 is modified to Phosphoserine. A JmjC domain is found at 147–315 (FSHTKLEHLV…MQLRIYEIED (169 aa)). Thr-208 is a binding site for substrate. The Fe cation site is built by His-211 and Asp-213. Lys-228 lines the substrate pocket. His-283 lines the Fe cation pocket. Residues 378–403 (DMEEESCEQQPQEEEEEEEDKEEEGD) show a composition bias toward acidic residues. Residues 378–476 (DMEEESCEQQ…PTGSPATEVS (99 aa)) form a disordered region. The span at 404–413 (GADKTPKPPT) shows a compositional bias: basic and acidic residues. The span at 415–424 (DPTSPTSTPP) shows a compositional bias: low complexity. A phosphoserine mark is found at Ser-447 and Ser-450. The residue at position 466 (Thr-466) is a Phosphothreonine. Positions 467-476 (PTGSPATEVS) are enriched in polar residues. Ser-470 carries the phosphoserine modification. A CXXC-type zinc finger spans residues 579 to 625 (ARRRRTRCRKCEACLRTECGECHFCKDMKKFGGPGRMKQSCIMRQCI). Residues Cys-586, Cys-589, Cys-592, Cys-597, Cys-600, Cys-603, Cys-619, Cys-624, Cys-635, Cys-638, Cys-661, Cys-664, His-669, Cys-672, Cys-692, and Cys-695 each contribute to the Zn(2+) site. The PHD-type zinc-finger motif lies at 632–698 (TAVCLVCGEA…CWECPKCNHA (67 aa)). Disordered regions lie at residues 700–816 (KTGK…SLSP) and 828–1005 (QLKP…SASP). A compositionally biased stretch (basic and acidic residues) spans 722–772 (KEQKMNRDNKEGQEPAKRRSECEEAPRRRSDEHPKKVPADGILRRKSDDVH). Positions 792 to 816 (SSLQTSPGSSSHLSPRPPLGSSLSP) are enriched in low complexity. Residues Lys-830 and Lys-863 each participate in a glycyl lysine isopeptide (Lys-Gly) (interchain with G-Cter in SUMO2) cross-link. Residues 883 to 892 (SRSSSPTAGP) show a composition bias toward polar residues. Positions 905–914 (KVKMRRKRRL) are enriched in basic residues. Residues 915–933 (VNKELSKELSKELNHEIQK) are compositionally biased toward basic and acidic residues. Residues 916 to 944 (NKELSKELSKELNHEIQKTESTLAHESQQ) are a coiled coil. At Ser-924 the chain carries Phosphoserine. Residues 934 to 946 (TESTLAHESQQPI) are compositionally biased toward polar residues. A phosphoserine mark is found at Ser-948 and Ser-952. Over residues 955 to 968 (DEPKRPLSHCERPH) the composition is skewed to basic and acidic residues. A phosphoserine mark is found at Ser-991 and Ser-1004. In terms of domain architecture, F-box spans 1032 to 1078 (DGAAHVMHREVWMAVFSYLSHRDLCVCMRVCRTWNRWCCDKRLWTRI). LRR repeat units follow at residues 1106–1127 (WTNI…LRDL), 1129–1155 (LSGC…DVQW), 1195–1220 (GLDI…QLSY), 1221–1250 (CNHI…NLSD), 1251–1275 (CNKV…DLRY), and 1276–1309 (CKQV…QKLS).

Belongs to the JHDM1 histone demethylase family. In terms of assembly, interacts with SKP1, forming heterodimers. The KDM2B-SKP1 heterodimeric complex interacts with the PCGF1-BCORL heterodimeric complex to form a homotetrameric polycomb repression complex 1 (PRC1.1). Directly interacts with CUL1. The SKP1-KDM2B interacts with UBB. The cofactor is Fe(2+).

It localises to the nucleus. The protein localises to the nucleolus. It is found in the chromosome. The enzyme catalyses N(6),N(6)-dimethyl-L-lysyl(36)-[histone H3] + 2 2-oxoglutarate + 2 O2 = L-lysyl(36)-[histone H3] + 2 formaldehyde + 2 succinate + 2 CO2. Histone demethylase activity is inhibited by fumarate. Functionally, histone demethylase that demethylates 'Lys-4' and 'Lys-36' of histone H3, thereby playing a central role in histone code. Preferentially demethylates trimethylated H3 'Lys-4' and dimethylated H3 'Lys-36' residue while it has weak or no activity for mono- and tri-methylated H3 'Lys-36'. Preferentially binds the transcribed region of ribosomal RNA and represses the transcription of ribosomal RNA genes which inhibits cell growth and proliferation. May also serve as a substrate-recognition component of the SCF (SKP1-CUL1-F-box protein)-type E3 ubiquitin ligase complex. The protein is Lysine-specific demethylase 2B (Kdm2b) of Mus musculus (Mouse).